Reading from the N-terminus, the 128-residue chain is Small ribosomal subunit protein uS11 (128 aa).

Belongs to the universal ribosomal protein uS11 family. As to quaternary structure, part of the 30S ribosomal subunit. Interacts with proteins S7 and S18. Binds to IF-3.

In terms of biological role, located on the platform of the 30S subunit, it bridges several disparate RNA helices of the 16S rRNA. Forms part of the Shine-Dalgarno cleft in the 70S ribosome. The protein is Small ribosomal subunit protein uS11 of Porphyromonas gingivalis (strain ATCC BAA-308 / W83).